Consider the following 134-residue polypeptide: Psoriasis susceptibility 1 candidate gene 2 protein homolog (134 aa).

A signal peptide spans 1–21 (MLTWKLLGLLVLCLCAGGISG). Residues 18-134 (GISGNGDPSP…DLDPPQEEYR (117 aa)) are disordered. Composition is skewed to pro residues over residues 39–67 (PPLPLGPPIPGDPWPGAPPLFDEPPPPGS) and 81–98 (PPKPPSTDPPKPPLPDDP). The segment covering 122 to 134 (EEPDLDPPQEEYR) has biased composition (acidic residues).

Its subcellular location is the secreted. The polypeptide is Psoriasis susceptibility 1 candidate gene 2 protein homolog (Psors1c2) (Mus musculus (Mouse)).